The chain runs to 187 residues: UPF0301 protein YqgE (187 aa).

This sequence belongs to the UPF0301 (AlgH) family.

The sequence is that of UPF0301 protein YqgE from Escherichia coli O127:H6 (strain E2348/69 / EPEC).